The sequence spans 300 residues: Ribosomal protein bS6--L-glutamate ligase (300 aa).

The 184-residue stretch at 104–287 folds into the ATP-grasp domain; sequence MQLLARQGID…IAGKMIRWIE (184 aa). Residues lysine 141, 178 to 179, aspartate 187, and 211 to 213 each bind ATP; these read EY and RSN. 3 residues coordinate Mg(2+): aspartate 248, glutamate 260, and asparagine 262. Aspartate 248, glutamate 260, and asparagine 262 together coordinate Mn(2+).

This sequence belongs to the RimK family. Requires Mg(2+) as cofactor. It depends on Mn(2+) as a cofactor.

An L-glutamate ligase that catalyzes the ATP-dependent post-translational addition of glutamate residues to the C-terminus of ribosomal protein bS6 (RpsF). Is also able to catalyze the synthesis of poly-alpha-glutamate in vitro, via ATP hydrolysis from unprotected glutamate as substrate. The number of glutamate residues added to either RpsF or to poly-alpha-glutamate changes with pH. The chain is Ribosomal protein bS6--L-glutamate ligase from Escherichia coli O7:K1 (strain IAI39 / ExPEC).